Consider the following 404-residue polypeptide: Cysteine desulfurase IscS (404 aa).

Residues 75-76, N155, Q183, and 203-205 contribute to the pyridoxal 5'-phosphate site; these read AT and SGH. An N6-(pyridoxal phosphate)lysine modification is found at K206. T243 contacts pyridoxal 5'-phosphate. C328 functions as the Cysteine persulfide intermediate in the catalytic mechanism. A [2Fe-2S] cluster-binding site is contributed by C328.

Belongs to the class-V pyridoxal-phosphate-dependent aminotransferase family. NifS/IscS subfamily. As to quaternary structure, homodimer. Forms a heterotetramer with IscU, interacts with other sulfur acceptors. The cofactor is pyridoxal 5'-phosphate.

The protein localises to the cytoplasm. It catalyses the reaction (sulfur carrier)-H + L-cysteine = (sulfur carrier)-SH + L-alanine. The protein operates within cofactor biosynthesis; iron-sulfur cluster biosynthesis. Functionally, master enzyme that delivers sulfur to a number of partners involved in Fe-S cluster assembly, tRNA modification or cofactor biosynthesis. Catalyzes the removal of elemental sulfur atoms from cysteine to produce alanine. Functions as a sulfur delivery protein for Fe-S cluster synthesis onto IscU, an Fe-S scaffold assembly protein, as well as other S acceptor proteins. The protein is Cysteine desulfurase IscS of Mannheimia succiniciproducens (strain KCTC 0769BP / MBEL55E).